Reading from the N-terminus, the 262-residue chain is Small ribosomal subunit protein eS4B (262 aa).

The S4 RNA-binding domain maps to 42–105; that stretch reads LPLIVFLRNR…GEHFRLVYDI (64 aa). A Phosphoserine modification is found at Ser-223.

The protein belongs to the eukaryotic ribosomal protein eS4 family. In terms of assembly, component of the small ribosomal subunit (SSU). Mature yeast ribosomes consist of a small (40S) and a large (60S) subunit. The 40S small subunit contains 1 molecule of ribosomal RNA (18S rRNA) and at least 33 different proteins. The large 60S subunit contains 3 rRNA molecules (25S, 5.8S and 5S rRNA) and at least 46 different proteins.

The protein localises to the cytoplasm. It localises to the nucleus. The protein resides in the nucleolus. In terms of biological role, component of the ribosome, a large ribonucleoprotein complex responsible for the synthesis of proteins in the cell. The small ribosomal subunit (SSU) binds messenger RNAs (mRNAs) and translates the encoded message by selecting cognate aminoacyl-transfer RNA (tRNA) molecules. The large subunit (LSU) contains the ribosomal catalytic site termed the peptidyl transferase center (PTC), which catalyzes the formation of peptide bonds, thereby polymerizing the amino acids delivered by tRNAs into a polypeptide chain. The nascent polypeptides leave the ribosome through a tunnel in the LSU and interact with protein factors that function in enzymatic processing, targeting, and the membrane insertion of nascent chains at the exit of the ribosomal tunnel. In Schizosaccharomyces pombe (strain 972 / ATCC 24843) (Fission yeast), this protein is Small ribosomal subunit protein eS4B (rps402).